A 330-amino-acid chain; its full sequence is ATP-dependent (S)-NAD(P)H-hydrate dehydratase (330 aa).

A YjeF C-terminal domain is found at 36–327 (VIPLVRNTIP…QEINSAFKKL (292 aa)). (6S)-NADPHX is bound by residues glycine 136 and 189 to 195 (NFMEFTR). Residues 229-233 (KGEED) and 248-257 (GSGRRCGGQG) contribute to the ATP site. Aspartate 258 provides a ligand contact to (6S)-NADPHX.

The protein belongs to the NnrD/CARKD family. Mg(2+) is required as a cofactor.

The enzyme catalyses (6S)-NADHX + ATP = ADP + phosphate + NADH + H(+). It catalyses the reaction (6S)-NADPHX + ATP = ADP + phosphate + NADPH + H(+). Its function is as follows. Catalyzes the dehydration of the S-form of NAD(P)HX at the expense of ATP, which is converted to ADP. Together with NAD(P)HX epimerase, which catalyzes the epimerization of the S- and R-forms, the enzyme allows the repair of both epimers of NAD(P)HX, a damaged form of NAD(P)H that is a result of enzymatic or heat-dependent hydration. The chain is ATP-dependent (S)-NAD(P)H-hydrate dehydratase from Danio rerio (Zebrafish).